The sequence spans 550 residues: uncharacterized protein (550 aa).

The first 53 residues, 1 to 53, serve as a signal peptide directing secretion; it reads MVVIANKGALWAYYCKRLLNSVTYMMYPLIRKRTMKKLLLIVGLLLACSTVMR. N-linked (GlcNAc...) asparagine glycans are attached at residues asparagine 296 and asparagine 518.

The protein resides in the endoplasmic reticulum. This is an uncharacterized protein from Schizosaccharomyces pombe (strain 972 / ATCC 24843) (Fission yeast).